Consider the following 451-residue polypeptide: Ubiquitin hydrolase B (451 aa).

The 432-residue stretch at 19–450 folds into the USP domain; that stretch reads RGLINTSNTC…EAYLLLYQLV (432 aa). A compositionally biased stretch (low complexity) spans 83 to 115; sequence NNSNSTTTTSSSSTTATTTSTSNNNKSQTPTSP. A disordered region spans residues 83 to 154; the sequence is NNSNSTTTTS…PPINPKHFND (72 aa). Positions 116–135 are enriched in polar residues; the sequence is IQQHHQSQTNGLSNQPSVAT. His399 functions as the Nucleophile in the catalytic mechanism. Catalysis depends on His408, which acts as the Proton acceptor.

It belongs to the peptidase C19 family. In terms of assembly, interacts with mkkA (via F-box/WD40 domains).

The catalysed reaction is Thiol-dependent hydrolysis of ester, thioester, amide, peptide and isopeptide bonds formed by the C-terminal Gly of ubiquitin (a 76-residue protein attached to proteins as an intracellular targeting signal).. In terms of biological role, required for proper prespore cell patterning. Plays a role in stabilizing mkkA by preventing it from being targeted for degradation. ubcB and ubpB differentially control ubiquitination/deubiquitination and degradation of mkkA in a cell-type-specific and temporally regulated manner. The sequence is that of Ubiquitin hydrolase B (ubpB) from Dictyostelium discoideum (Social amoeba).